The chain runs to 144 residues: Transcription antitermination protein NusB (144 aa).

The protein belongs to the NusB family.

Its function is as follows. Involved in transcription antitermination. Required for transcription of ribosomal RNA (rRNA) genes. Binds specifically to the boxA antiterminator sequence of the ribosomal RNA (rrn) operons. In Blochmanniella pennsylvanica (strain BPEN), this protein is Transcription antitermination protein NusB.